The sequence spans 359 residues: Peptide chain release factor 1 (359 aa).

Position 235 is an N5-methylglutamine (Gln235). A disordered region spans residues 280–306; it reads AERQRADSERSADRKSQVGSGDRSERI.

Belongs to the prokaryotic/mitochondrial release factor family. In terms of processing, methylated by PrmC. Methylation increases the termination efficiency of RF1.

Its subcellular location is the cytoplasm. In terms of biological role, peptide chain release factor 1 directs the termination of translation in response to the peptide chain termination codons UAG and UAA. This chain is Peptide chain release factor 1, found in Rhizobium johnstonii (strain DSM 114642 / LMG 32736 / 3841) (Rhizobium leguminosarum bv. viciae).